The following is a 924-amino-acid chain: Protein translocase subunit SecA (924 aa).

ATP-binding positions include Gln-87, 105–109, and Asp-515; that span reads GEGKT. Residues Cys-908, Cys-910, Cys-919, and His-920 each contribute to the Zn(2+) site.

The protein belongs to the SecA family. In terms of assembly, monomer and homodimer. Part of the essential Sec protein translocation apparatus which comprises SecA, SecYEG and auxiliary proteins SecDF-YajC and YidC. Zn(2+) is required as a cofactor.

It is found in the cell inner membrane. The protein resides in the cytoplasm. It catalyses the reaction ATP + H2O + cellular proteinSide 1 = ADP + phosphate + cellular proteinSide 2.. Functionally, part of the Sec protein translocase complex. Interacts with the SecYEG preprotein conducting channel. Has a central role in coupling the hydrolysis of ATP to the transfer of proteins into and across the cell membrane, serving both as a receptor for the preprotein-SecB complex and as an ATP-driven molecular motor driving the stepwise translocation of polypeptide chains across the membrane. The polypeptide is Protein translocase subunit SecA (Cupriavidus pinatubonensis (strain JMP 134 / LMG 1197) (Cupriavidus necator (strain JMP 134))).